Consider the following 274-residue polypeptide: Elongation factor Ts (274 aa).

The involved in Mg(2+) ion dislocation from EF-Tu stretch occupies residues 79–82; sequence TDFV.

Belongs to the EF-Ts family.

Its subcellular location is the cytoplasm. In terms of biological role, associates with the EF-Tu.GDP complex and induces the exchange of GDP to GTP. It remains bound to the aminoacyl-tRNA.EF-Tu.GTP complex up to the GTP hydrolysis stage on the ribosome. The protein is Elongation factor Ts of Porphyromonas gingivalis (strain ATCC 33277 / DSM 20709 / CIP 103683 / JCM 12257 / NCTC 11834 / 2561).